We begin with the raw amino-acid sequence, 834 residues long: Enhancer of filamentation 1 (834 aa).

A required for interaction with ITCH region spans residues 1–505 (MKYKNLMARA…HQILSQTSHD (505 aa)). In terms of domain architecture, SH3 spans 3–65 (YKNLMARALY…PGNRVKLLIG (63 aa)). Tyrosine 92, tyrosine 164, tyrosine 166, tyrosine 177, tyrosine 189, tyrosine 214, and tyrosine 223 each carry phosphotyrosine; by ABL1. An interacts strongly with spindle-regulatory protein D1M1 region spans residues 102-229 (RDTIYQVPPS…KGVYAIPPSA (128 aa)). The interval 238-260 (EKDYDFPPPMRQAGRPDLRPEGV) is disordered. Position 279 is a phosphotyrosine; by ABL1 (tyrosine 279). Positions 291 to 316 (ARRHQSLSPNHPPPQLGQSVGSQNDA) are disordered. Serine 296 is modified (phosphoserine). Residues 306 to 315 (LGQSVGSQND) show a composition bias toward polar residues. Tyrosine 317 carries the post-translational modification Phosphotyrosine; by ABL1. Disordered regions lie at residues 328 to 398 (PPAE…SPAQ) and 560 to 623 (GPGS…GSER). The span at 332–344 (TSEKANPQERDGV) shows a compositional bias: basic and acidic residues. The interacts with CTTN stretch occupies residues 351 to 834 (NPPDAKGSRD…KRSLLEMATF (484 aa)). A Caspase cleavage related site motif is present at residues 360 to 363 (DLVD). Serine 369 carries the post-translational modification Phosphoserine. A compositionally biased stretch (low complexity) spans 369–395 (SFSSTGSTRSNMSTSSTSSKESSLSAS). The divergent helix-loop-helix motif stretch occupies residues 710 to 760 (FYYDQCETHFISLLNAIDALFSCVSSAQPPRIFVAHSKFVILSAHKLVFIG). The required for interaction with PLK1 stretch occupies residues 710–834 (FYYDQCETHF…KRSLLEMATF (125 aa)). The residue at position 780 (serine 780) is a Phosphoserine; by CSNK1D and CSNK1E. Phosphothreonine; by CSNK1E is present on threonine 804.

Belongs to the CAS family. Homodimer. Forms heterodimers with BCAR1/p130cas. Forms complexes with PTK2B/RAFTK, adapter protein CRKL and LYN kinase. Part of a complex composed of NEDD9, AURKA and CTTN; within the complex NEDD9 acts as a scaffold protein and is required for complex formation. Part of a ternary complex composed of SMAD3, ITCH/AIP4 and NEDD9/HEF1; within the complex NEDD9/HEF1 interacts (via N-terminus) with ITCH/AIP4 (via WW domains); the complex mediates ubiquitination and proteasomal degradation of NEDD9/HEF1. Interacts with SMAD3; the interaction promotes NEDD9 ubiquitination and proteasomal degradation. Interacts with ID2. Interacts with CTTN (via N-terminus). Interacts with MICAL. Interacts with TXNL4/DIM1. Interacts with BCAR3 (via Ras-GEF domain). Interacts with SH2D3C isoform 1 and isoform 2. Interacts with ECT2. Interacts with PTPN11/SHP-2 (via SH2 domains); the interaction is enhanced when NEDD9/CAS-L is tyrosine phosphorylated. Interacts (via C-terminus) with PLK1 (via polo box domains). Interacts with NKX2-5. Interacts with SMAD3; the interaction is inhibited by oxidation of NEDD9. Interacts with NEDD9/HEF1; interaction is induced by CXCL12 promotion of ABL-mediated phosphorylation of NEDD9/HEF1. Interacts (via SH3 domain) with PTK2/FAK. Interacts with FYN; in the presence of PTK2. Interacts with INPPL1/SHIP2. Cell cycle-regulated processing produces four isoforms: p115, p105, p65, and p55. Isoform p115 arises from p105 phosphorylation and appears later in the cell cycle. Isoform p55 arises from p105 as a result of cleavage at a caspase cleavage-related site and it appears specifically at mitosis. The p65 isoform is poorly detected. In terms of processing, polyubiquitinated by ITCH/AIP4, leading to proteasomal degradation. Post-translationally, PTK2/FAK1 phosphorylates the protein at the YDYVHL motif (conserved among all cas proteins) following integrin stimulation. The SRC family kinases (FYN, SRC, LCK and CRK) are recruited to the phosphorylated sites and can phosphorylate other tyrosine residues. Ligation of either integrin beta-1 or B-cell antigen receptor on tonsillar B-cells and B-cell lines promotes tyrosine phosphorylation and both integrin and BCR-mediated tyrosine phosphorylation requires an intact actin network. Phosphorylation is required to recruit NEDD9 to T-cell receptor microclusters at the periphery of newly formed immunological synapses. In fibroblasts transformation with oncogene v-ABL results in an increase in tyrosine phosphorylation. Transiently phosphorylated following CD3 cross-linking and this phosphorylated form binds to CRKL and C3G. A mutant lacking the SH3 domain is phosphorylated upon CD3 cross-linking but not upon integrin beta-1 cross-linking. Tyrosine phosphorylation occurs upon stimulation of the G-protein coupled C1a calcitonin receptor. Calcitonin-stimulated tyrosine phosphorylation is mediated by calcium- and protein kinase C-dependent mechanisms and requires the integrity of the actin cytoskeleton. Phosphorylation at Ser-369 induces proteasomal degradation. Phosphorylated by LYN. Phosphorylation at Ser-780 by CSNK1D or CSNK1E, or phosphorylation of Thr-804 by CSNK1E enhances the interaction of NEDD9 with PLK1. Expressed in B-cells (at protein level). Expressed in the respiratory epithelium of the main bronchi to the bronchioles in the lungs (at protein level). High levels detected in kidney, lung, and placenta. Expressed in lymphocytes.

It is found in the cytoplasm. The protein resides in the cell cortex. Its subcellular location is the nucleus. The protein localises to the golgi apparatus. It localises to the cell projection. It is found in the lamellipodium. The protein resides in the cell junction. Its subcellular location is the focal adhesion. The protein localises to the cytoskeleton. It localises to the spindle pole. It is found in the cilium. The protein resides in the cilium basal body. Its subcellular location is the basolateral cell membrane. The protein localises to the spindle. Functionally, scaffolding protein which plays a central coordinating role for tyrosine-kinase-based signaling related to cell adhesion. As a focal adhesion protein, plays a role in embryonic fibroblast migration. May play an important role in integrin beta-1 or B cell antigen receptor (BCR) mediated signaling in B- and T-cells. Integrin beta-1 stimulation leads to recruitment of various proteins including CRKL and SHPTP2 to the tyrosine phosphorylated form. Promotes adhesion and migration of lymphocytes; as a result required for the correct migration of lymphocytes to the spleen and other secondary lymphoid organs. Plays a role in the organization of T-cell F-actin cortical cytoskeleton and the centralization of T-cell receptor microclusters at the immunological synapse. Negatively regulates cilia outgrowth in polarized cysts. Modulates cilia disassembly via activation of AURKA-mediated phosphorylation of HDAC6 and subsequent deacetylation of alpha-tubulin. Positively regulates RANKL-induced osteoclastogenesis. Required for the maintenance of hippocampal dendritic spines in the dentate gyrus and CA1 regions, thereby involved in spatial learning and memory. The chain is Enhancer of filamentation 1 from Homo sapiens (Human).